Here is a 396-residue protein sequence, read N- to C-terminus: Interleukin enhancer-binding factor 2 homolog (396 aa).

One can recognise a DZF domain in the interval 22-379 (KTFVPRHPFD…KKEGDLEEDI (358 aa)). The segment at 367 to 396 (PTDKKEGDLEEDIDMIENENEEEGSDDGAE) is disordered. Positions 374-396 (DLEEDIDMIENENEEEGSDDGAE) are enriched in acidic residues.

Its subcellular location is the nucleus. Its function is as follows. May regulate transcription of undefined genes. The sequence is that of Interleukin enhancer-binding factor 2 homolog from Drosophila melanogaster (Fruit fly).